We begin with the raw amino-acid sequence, 107 residues long: uncharacterized protein (107 aa).

The next 3 helical transmembrane spans lie at Phe-20–Ile-40, Pro-49–Val-69, and Val-86–Leu-106.

Its subcellular location is the membrane. This is an uncharacterized protein from Saccharomyces cerevisiae (strain ATCC 204508 / S288c) (Baker's yeast).